The chain runs to 538 residues: Probable folate-biopterin transporter 9, chloroplastic (538 aa).

The transit peptide at 1-57 (MNNPLLSISNPVKFFKPPIPYRISLNTTINKKQKHQSKTLVVKSNKRSTTSLTSSVS) directs the protein to the chloroplast. 12 helical membrane-spanning segments follow: residues 85-105 (VLLC…WLAL), 129-149 (LPMV…IGGA), 152-172 (VPYI…LAIF), 178-198 (VLPS…ITEV), 220-240 (ALMA…YCLL), 246-266 (ILFL…LSSK), 309-329 (LIWI…VFCY), 339-359 (SVIG…TVVY), 370-390 (ALIH…YILV), 395-415 (LAFG…AEIL), 447-467 (LCLS…MIGI), and 479-499 (ILIQ…VPML).

Belongs to the major facilitator superfamily. Folate-biopterin transporter (TC 2.A.71) family.

It is found in the plastid. It localises to the chloroplast membrane. Functionally, could mediate folate transport. This chain is Probable folate-biopterin transporter 9, chloroplastic, found in Arabidopsis thaliana (Mouse-ear cress).